A 92-amino-acid polypeptide reads, in one-letter code: uncharacterized protein (92 aa).

3 helical membrane-spanning segments follow: residues 1 to 21, 29 to 49, and 51 to 71; these read MEVLPLVSGICCILGGIGVIL, IIMLALLEIGMIGLIVSCYYL, and IAIVSSLCEPICTVILLLGYL.

It is found in the cell membrane. This is an uncharacterized protein from Methanocaldococcus jannaschii (strain ATCC 43067 / DSM 2661 / JAL-1 / JCM 10045 / NBRC 100440) (Methanococcus jannaschii).